The sequence spans 471 residues: Probable anion transporter 5, chloroplastic (471 aa).

The transit peptide at 1 to 59 directs the protein to the chloroplast; sequence MAASASASALQAERCLLVGVGAGPRRHRLPLRMPPPLHAPPALLLLPHRRRRRWPPAVR. Positions 56–76 are disordered; sequence PAVRASPGEGGGGGGGGGGGG. The next 4 membrane-spanning stretches (helical) occupy residues 62 to 82, 103 to 123, 162 to 182, and 185 to 205; these read PGEG…AGAL, IGVV…GFMP, VVFG…PPII, and LGWE…CLGF. The segment covering 63–76 has biased composition (gly residues); the sequence is GEGGGGGGGGGGGG. The segment at 226 to 247 is disordered; the sequence is GQSPSGSSDLISSSVSPKSSES. The span at 228 to 247 shows a compositional bias: low complexity; sequence SPSGSSDLISSSVSPKSSES. Transmembrane regions (helical) follow at residues 270–290, 307–327, 348–368, 371–391, 403–423, and 435–455; these read VWAM…CLSW, AWVS…AAPF, IAFL…GVPP, IVAF…GLYC, ILLG…VALT, and ISLF…WLAF.

The protein belongs to the major facilitator superfamily. Sodium/anion cotransporter (TC 2.A.1.14) family.

The protein resides in the plastid. The protein localises to the chloroplast membrane. In terms of biological role, probable anion transporter. The protein is Probable anion transporter 5, chloroplastic (PHT4;5) of Oryza sativa subsp. japonica (Rice).